The following is a 122-amino-acid chain: NLIQFKKMIKKMTGKEPVVSYAFYGCYCGSGGRGKPKDATDRCCFVHNCCYEKVTGCDPKWDDYTYSWKNGTIVCGGDDPCKKEVCECDKAAAICFRDNLKTYKKRYMTYPNILCSSKSEKC.

Disulfide bonds link Cys-26/Cys-115, Cys-28/Cys-44, Cys-43/Cys-95, Cys-49/Cys-122, Cys-50/Cys-88, Cys-57/Cys-81, and Cys-75/Cys-86. Positions 105–117 are important for membrane-damaging activities in eukaryotes and bacteria; heparin-binding; that stretch reads KRYMTYPNILCSS.

The protein belongs to the phospholipase A2 family. Group II subfamily. N49 sub-subfamily. As to expression, expressed by the venom gland.

Its subcellular location is the secreted. The sequence is that of Basic phospholipase A2 homolog from Gloydius halys (Chinese water mocassin).